The sequence spans 309 residues: Ankyrin repeat and SOCS box protein 12 (309 aa).

ANK repeat units lie at residues 63-92 (VPGT…DVDS), 96-125 (KAQT…SPGG), 129-158 (NNCS…EANV), 171-200 (SCSG…DPDY), and 213-243 (RPRT…NIYL). One can recognise an SOCS box domain in the interval 268 to 308 (PRSLLSQVRLVVRRALCQAGQPQAINQLDIPPMLISYLKHQ).

This sequence belongs to the ankyrin SOCS box (ASB) family. In terms of assembly, interacts with CUL5 and RNF7.

It functions in the pathway protein modification; protein ubiquitination. Its function is as follows. Probable substrate-recognition component of a SCF-like ECS (Elongin-Cullin-SOCS-box protein) E3 ubiquitin-protein ligase complex which mediates the ubiquitination and subsequent proteasomal degradation of target proteins. This chain is Ankyrin repeat and SOCS box protein 12 (ASB12), found in Homo sapiens (Human).